Reading from the N-terminus, the 416-residue chain is Serine/threonine transporter SstT (416 aa).

9 helical membrane passes run 15 to 35 (SLVS…MFMP), 49 to 69 (VGAL…AAII), 82 to 102 (ILLL…VASF), 141 to 161 (ALLD…GIAM), 192 to 212 (LGIL…ALFG), 217 to 237 (LVVL…LIVF), 288 to 308 (VSIP…ITVL), 316 to 336 (LGME…TISA), and 363 to 383 (IAMQ…SAET).

Belongs to the dicarboxylate/amino acid:cation symporter (DAACS) (TC 2.A.23) family.

The protein localises to the cell inner membrane. The catalysed reaction is L-serine(in) + Na(+)(in) = L-serine(out) + Na(+)(out). It carries out the reaction L-threonine(in) + Na(+)(in) = L-threonine(out) + Na(+)(out). In terms of biological role, involved in the import of serine and threonine into the cell, with the concomitant import of sodium (symport system). In Aeromonas hydrophila subsp. hydrophila (strain ATCC 7966 / DSM 30187 / BCRC 13018 / CCUG 14551 / JCM 1027 / KCTC 2358 / NCIMB 9240 / NCTC 8049), this protein is Serine/threonine transporter SstT.